Reading from the N-terminus, the 273-residue chain is Glutamate 5-kinase (273 aa).

K15 contributes to the ATP binding site. Substrate-binding residues include S55, D142, and N158. ATP contacts are provided by residues 178–179 (SD) and 220–226 (TGGMLSK).

The protein belongs to the glutamate 5-kinase family.

The protein localises to the cytoplasm. It catalyses the reaction L-glutamate + ATP = L-glutamyl 5-phosphate + ADP. It participates in amino-acid biosynthesis; L-proline biosynthesis; L-glutamate 5-semialdehyde from L-glutamate: step 1/2. Catalyzes the transfer of a phosphate group to glutamate to form L-glutamate 5-phosphate. The sequence is that of Glutamate 5-kinase from Streptococcus pyogenes serotype M49 (strain NZ131).